The chain runs to 78 residues: Defensin-like protein 308 (78 aa).

An N-terminal signal peptide occupies residues 1 to 19 (MKTSAFFIAVLLILSCSSS). Disulfide bonds link C31–C50, C37–C55, and C41–C57.

This sequence belongs to the DEFL family.

It is found in the secreted. The polypeptide is Defensin-like protein 308 (Arabidopsis thaliana (Mouse-ear cress)).